The following is a 239-amino-acid chain: Phosphothreonine lyase OspF (239 aa).

The active-site Proton donor is His104. The active-site Proton acceptor is Lys134.

Belongs to the phosphothreonine lyase family.

It is found in the secreted. With respect to regulation, inhibited by the tyrosine phosphatase inhibitor vanadate. Its function is as follows. Catalyzes the removal of the phosphate group from the phosphothreonine in the mitogen-activated protein kinases such as MAPK2/ERK2, MAPK3/ERK1, MAPK8 and MAPK14 in an irreversible reaction, thus preventing the downstream phosphorylation of histone H3. This epigenetic modification results in inhibition of the transcription of a specific subset of pro-inflammatory genes, and ultimately to a reduced immune response against the invading pathogen. The diminished immune response enhances the bacterium's ability to disseminate and multiply within the host. This is Phosphothreonine lyase OspF (ospF) from Shigella flexneri.